Reading from the N-terminus, the 43-residue chain is Omega-agatoxin-Aa3c (43 aa).

Intrachain disulfides connect Cys-2–Cys-19, Cys-9–Cys-25, and Cys-27–Cys-38.

The protein belongs to the neurotoxin 04 (omega-agtx) family. 03 (type II/III omega-agtx) subfamily. Expressed by the venom gland.

Its subcellular location is the secreted. Functionally, omega-agatoxins are antagonists of voltage-gated calcium channels (Cav). The chain is Omega-agatoxin-Aa3c from Agelenopsis aperta (North American funnel-web spider).